The chain runs to 631 residues: tRNA uridine 5-carboxymethylaminomethyl modification enzyme MnmG (631 aa).

FAD-binding positions include 13–18 (GGGHAG), valine 125, and serine 180. 273 to 287 (GPRYCPSIEDKVMRF) contributes to the NAD(+) binding site. Glutamine 370 contacts FAD.

The protein belongs to the MnmG family. As to quaternary structure, homodimer. Heterotetramer of two MnmE and two MnmG subunits. It depends on FAD as a cofactor.

It localises to the cytoplasm. NAD-binding protein involved in the addition of a carboxymethylaminomethyl (cmnm) group at the wobble position (U34) of certain tRNAs, forming tRNA-cmnm(5)s(2)U34. This is tRNA uridine 5-carboxymethylaminomethyl modification enzyme MnmG from Vibrio campbellii (strain ATCC BAA-1116).